The chain runs to 70 residues: Frenatin 4.1 (70 aa).

The N-terminal stretch at 1 to 22 (MAFLKKSLFLVLFLGLVNLSIC) is a signal peptide. A propeptide spanning residues 23–46 (EEEKREEENKEEEDENEALSEVKR) is cleaved from the precursor. Lys-68 is subject to Lysine amide.

This sequence belongs to the frog skin active peptide (FSAP) family. Frenatin subfamily. Expressed by the skin glands.

The protein resides in the secreted. It localises to the target cell membrane. In terms of biological role, peptide with unknown function. Does not show antimicrobial activity against S.aureus (MIC&gt;512 ug/mL), E.coli (MIC&gt;512 ug/mL) and C.albicans (MIC&gt;512 ug/mL). Does not show hemolytic activity. Antimicrobial peptide with activity against E.coli (MIC=128 ug/mL or 54 uM) and C.albicans (MIC=256 ug/mL or 108 uM). Does not show activity against S.aureus (MIC&gt;512 ug/mL). Does not show hemolytic activity. This Nyctimystes infrafrenatus (White-lipped tree frog) protein is Frenatin 4.1.